The following is a 134-amino-acid chain: Large ribosomal subunit protein uL22 (134 aa).

Belongs to the universal ribosomal protein uL22 family. As to quaternary structure, part of the 50S ribosomal subunit.

In terms of biological role, this protein binds specifically to 23S rRNA; its binding is stimulated by other ribosomal proteins, e.g. L4, L17, and L20. It is important during the early stages of 50S assembly. It makes multiple contacts with different domains of the 23S rRNA in the assembled 50S subunit and ribosome. Its function is as follows. The globular domain of the protein is located near the polypeptide exit tunnel on the outside of the subunit, while an extended beta-hairpin is found that lines the wall of the exit tunnel in the center of the 70S ribosome. The sequence is that of Large ribosomal subunit protein uL22 from Gluconacetobacter diazotrophicus (strain ATCC 49037 / DSM 5601 / CCUG 37298 / CIP 103539 / LMG 7603 / PAl5).